A 327-amino-acid chain; its full sequence is MTSQSQNIVETPSRVRAHALGINAPELAQYQDEPAQMRSGAVGKSGYLKLRFAKREHRSILAEMERRVPSMVQKALYWDEEMPELPCVTMISTSGCILQGDRLATDVIVEAGACAHVTTQSATKVHMMNANYASQIQNFTVEEGGYLEFMPDPLIPHRNSRFITDTTINIHPTATAIYSEVLMSGRKYHHADERFGFDVYSSRVAAHVFLGKEQPAGKELFVEKYVLEPKSESLDAIGVMQSFDAFGNVILLTPKQHHERILARVPAHFDIKGGIASGATRLPNDCGLVFKALGIDSAGVKNEIRQFWKIAREEILGVTLPEKFLWR.

The protein belongs to the UreD family. In terms of assembly, ureD, UreF and UreG form a complex that acts as a GTP-hydrolysis-dependent molecular chaperone, activating the urease apoprotein by helping to assemble the nickel containing metallocenter of UreC. The UreE protein probably delivers the nickel.

The protein resides in the cytoplasm. Its function is as follows. Required for maturation of urease via the functional incorporation of the urease nickel metallocenter. The protein is Urease accessory protein UreD of Yersinia enterocolitica serotype O:8 / biotype 1B (strain NCTC 13174 / 8081).